Here is a 525-residue protein sequence, read N- to C-terminus: GMP synthase [glutamine-hydrolyzing] (525 aa).

The 200-residue stretch at 8–207 folds into the Glutamine amidotransferase type-1 domain; the sequence is KILILDFGSQ…AVAICGCGTN (200 aa). The active-site Nucleophile is C85. Residues H181 and E183 contribute to the active site. The region spanning 208 to 400 is the GMPS ATP-PPase domain; it reads WKPSSIIEDA…LGLPYNMLYR (193 aa). Residue 235-241 coordinates ATP; sequence SGGVDSS.

Homodimer.

The enzyme catalyses XMP + L-glutamine + ATP + H2O = GMP + L-glutamate + AMP + diphosphate + 2 H(+). It participates in purine metabolism; GMP biosynthesis; GMP from XMP (L-Gln route): step 1/1. Catalyzes the synthesis of GMP from XMP. In Shewanella denitrificans (strain OS217 / ATCC BAA-1090 / DSM 15013), this protein is GMP synthase [glutamine-hydrolyzing].